The chain runs to 260 residues: MSSSFVYKSLFLVPILAVVAMQLSFVQSVLSLNQTNEYLHHLCLNRQGTYESGSKYARDLNNLIQMISISILGDVVVFSGDNSIYVKLQCRGDSSTSTCRSCLDTAFSGVSRRCLNNKGRIIWYDNCVLTISNISYVWRDRLPEQFLYFNAKDVSGDAKSFNEKTRTLLYKLKEKASSKENIPNKKNYLYATGEESLGKMKLYAMVQCTQDLSIKNCNVCLNWILGKLPKCCNDKQGGRFLSTSCNFRYELYLFVKLTTI.

The first 31 residues, Met-1–Ser-31, serve as a signal peptide directing secretion. Gnk2-homologous domains are found at residues Tyr-38–Tyr-136 and Leu-142–Phe-254.

This sequence belongs to the cysteine-rich repeat secretory protein family.

Its subcellular location is the secreted. The chain is Putative cysteine-rich repeat secretory protein 23 (CRRSP23) from Arabidopsis thaliana (Mouse-ear cress).